The following is a 101-amino-acid chain: Small ribosomal subunit protein uS14 (101 aa).

It belongs to the universal ribosomal protein uS14 family. Part of the 30S ribosomal subunit. Contacts proteins S3 and S10.

In terms of biological role, binds 16S rRNA, required for the assembly of 30S particles and may also be responsible for determining the conformation of the 16S rRNA at the A site. The protein is Small ribosomal subunit protein uS14 of Polynucleobacter necessarius subsp. necessarius (strain STIR1).